The chain runs to 317 residues: HTH-type transcriptional repressor PA14_22550 (317 aa).

The 59-residue stretch at 1 to 59 (MDKLTAMATFVKVVDAGSFTRAADALGLPKARVSQRVSDLEKHLGVRLLNRTTRALSLT) folds into the HTH lysR-type domain. A DNA-binding region (H-T-H motif) is located at residues 19–38 (FTRAADALGLPKARVSQRVS).

This sequence belongs to the LysR transcriptional regulatory family.

Represses the transcription of the operon that consists of PA14_22510 to PA14_22540. The sequence is that of HTH-type transcriptional repressor PA14_22550 from Pseudomonas aeruginosa (strain UCBPP-PA14).